The chain runs to 147 residues: Myoglobin (147 aa).

The Globin domain occupies 2–141 (ADFDMVLKCW…IITDMEADYK (140 aa)). Position 60 (His-60) interacts with nitrite. His-60 provides a ligand contact to O2. His-89 provides a ligand contact to heme b.

This sequence belongs to the globin family. As to quaternary structure, monomeric.

Its subcellular location is the cytoplasm. It is found in the sarcoplasm. It carries out the reaction Fe(III)-heme b-[protein] + nitric oxide + H2O = Fe(II)-heme b-[protein] + nitrite + 2 H(+). The enzyme catalyses H2O2 + AH2 = A + 2 H2O. Functionally, monomeric heme protein which primary function is to store oxygen and facilitate its diffusion within muscle tissues. Reversibly binds oxygen through a pentacoordinated heme iron and enables its timely and efficient release as needed during periods of heightened demand. Depending on the oxidative conditions of tissues and cells, and in addition to its ability to bind oxygen, it also has a nitrite reductase activity whereby it regulates the production of bioactive nitric oxide. Under stress conditions, like hypoxia and anoxia, it also protects cells against reactive oxygen species thanks to its pseudoperoxidase activity. In Channichthys rhinoceratus (Unicorn icefish), this protein is Myoglobin (mb).